The following is a 561-amino-acid chain: Arginine--tRNA ligase (561 aa).

A 'HIGH' region motif is present at residues 129-139; it reads ANPTGPLHVGH.

This sequence belongs to the class-I aminoacyl-tRNA synthetase family. In terms of assembly, monomer.

Its subcellular location is the cytoplasm. It catalyses the reaction tRNA(Arg) + L-arginine + ATP = L-arginyl-tRNA(Arg) + AMP + diphosphate. This Bordetella bronchiseptica (strain ATCC BAA-588 / NCTC 13252 / RB50) (Alcaligenes bronchisepticus) protein is Arginine--tRNA ligase.